The chain runs to 126 residues: Large ribosomal subunit protein bL12 (126 aa).

It belongs to the bacterial ribosomal protein bL12 family. Homodimer. Part of the ribosomal stalk of the 50S ribosomal subunit. Forms a multimeric L10(L12)X complex, where L10 forms an elongated spine to which 2 to 4 L12 dimers bind in a sequential fashion. Binds GTP-bound translation factors.

Forms part of the ribosomal stalk which helps the ribosome interact with GTP-bound translation factors. Is thus essential for accurate translation. In Trichlorobacter lovleyi (strain ATCC BAA-1151 / DSM 17278 / SZ) (Geobacter lovleyi), this protein is Large ribosomal subunit protein bL12.